Consider the following 485-residue polypeptide: Membrane-bound lytic murein transglycosylase F (485 aa).

A signal peptide spans 1-29; the sequence is MFAHTALRQRCAKWLFATGLFLLLGACVE. Residues 30 to 267 are non-LT domain; that stretch reads KPSTLERVKE…RLKDRYYGHV (238 aa). An LT domain region spans residues 268 to 485; that stretch reads DVLGYVGAYT…DKPADQSPPM (218 aa). Residue E314 is part of the active site. The tract at residues 465–485 is disordered; that stretch reads EGNLHVPGVNKDKPADQSPPM.

The protein in the N-terminal section; belongs to the bacterial solute-binding protein 3 family. It in the C-terminal section; belongs to the transglycosylase Slt family.

The protein localises to the cell outer membrane. The catalysed reaction is Exolytic cleavage of the (1-&gt;4)-beta-glycosidic linkage between N-acetylmuramic acid (MurNAc) and N-acetylglucosamine (GlcNAc) residues in peptidoglycan, from either the reducing or the non-reducing ends of the peptidoglycan chains, with concomitant formation of a 1,6-anhydrobond in the MurNAc residue.. Functionally, murein-degrading enzyme that degrades murein glycan strands and insoluble, high-molecular weight murein sacculi, with the concomitant formation of a 1,6-anhydromuramoyl product. Lytic transglycosylases (LTs) play an integral role in the metabolism of the peptidoglycan (PG) sacculus. Their lytic action creates space within the PG sacculus to allow for its expansion as well as for the insertion of various structures such as secretion systems and flagella. The protein is Membrane-bound lytic murein transglycosylase F of Pseudomonas putida (strain GB-1).